A 125-amino-acid chain; its full sequence is Glycine cleavage system H protein (125 aa).

The Lipoyl-binding domain maps to 19 to 101; that stretch reads GAVVGITDFA…NGSGWFFKLT (83 aa). Lys-60 is subject to N6-lipoyllysine.

The protein belongs to the GcvH family. In terms of assembly, the glycine cleavage system is composed of four proteins: P, T, L and H. It depends on (R)-lipoate as a cofactor.

In terms of biological role, the glycine cleavage system catalyzes the degradation of glycine. The H protein shuttles the methylamine group of glycine from the P protein to the T protein. This Methylocella silvestris (strain DSM 15510 / CIP 108128 / LMG 27833 / NCIMB 13906 / BL2) protein is Glycine cleavage system H protein.